Reading from the N-terminus, the 349-residue chain is MFSSLLEAAKSSPFHGPLTPARCDAPAQGMAASAAPVGDSCEFGSTKYFALCGLGGILSCGITHTAVVPLDLVKCRLQVDADKYKNVVNGFRVSVREEGLRGLAKGWAPTFIGYSLQGLCKFGLYEVFKVQYNNMLDEETAYTYRTFVYLAASASAEFFADIALSPLEAAKVRIQTMPGVRQHTARRVAQDGPERGAWARSTRALVPLWGRQIPYTMMKFACFEKTVELLYKHVVPKPRAECSKGEQLVVTFAAGYIAGVFCAIVSHPADTVVSKLNQDKTATVGSIVGKLGFAGVWKGLGPRIIMIGTLTALQWFIYDAVKVWLRMPRPPPAEMPESMRKRLEAEGKL.

Solcar repeat units lie at residues 47-131, 144-229, and 246-324; these read KYFA…FKVQ, YRTF…TVEL, and EQLV…VKVW. Helical transmembrane passes span 48 to 68, 108 to 128, 147 to 167, 207 to 227, 248 to 268, and 304 to 324; these read YFAL…TAVV, APTF…YEVF, FVYL…LSPL, PLWG…EKTV, LVVT…VSHP, and IIMI…VKVW.

This sequence belongs to the mitochondrial carrier (TC 2.A.29) family.

It localises to the mitochondrion inner membrane. In terms of biological role, transport of phosphate groups from the cytosol to the mitochondrial matrix. The protein is Phosphate carrier protein, mitochondrial of Choristoneura fumiferana (Spruce budworm moth).